Reading from the N-terminus, the 460-residue chain is Bifunctional protein GlmU (460 aa).

Residues M1–R235 form a pyrophosphorylase region. Residues L9 to G12, K23, Q76, and G81 to T82 contribute to the UDP-N-acetyl-alpha-D-glucosamine site. Residue D109 coordinates Mg(2+). G146, E161, N176, and N233 together coordinate UDP-N-acetyl-alpha-D-glucosamine. N233 is a Mg(2+) binding site. Positions V236–D256 are linker. The segment at G257 to R460 is N-acetyltransferase. Positions 338 and 356 each coordinate UDP-N-acetyl-alpha-D-glucosamine. The active-site Proton acceptor is the H368. 2 residues coordinate UDP-N-acetyl-alpha-D-glucosamine: Y371 and N382. Acetyl-CoA contacts are provided by residues N391–Y392 and A428.

This sequence in the N-terminal section; belongs to the N-acetylglucosamine-1-phosphate uridyltransferase family. It in the C-terminal section; belongs to the transferase hexapeptide repeat family. Homotrimer. It depends on Mg(2+) as a cofactor.

The protein resides in the cytoplasm. The enzyme catalyses alpha-D-glucosamine 1-phosphate + acetyl-CoA = N-acetyl-alpha-D-glucosamine 1-phosphate + CoA + H(+). It catalyses the reaction N-acetyl-alpha-D-glucosamine 1-phosphate + UTP + H(+) = UDP-N-acetyl-alpha-D-glucosamine + diphosphate. Its pathway is nucleotide-sugar biosynthesis; UDP-N-acetyl-alpha-D-glucosamine biosynthesis; N-acetyl-alpha-D-glucosamine 1-phosphate from alpha-D-glucosamine 6-phosphate (route II): step 2/2. The protein operates within nucleotide-sugar biosynthesis; UDP-N-acetyl-alpha-D-glucosamine biosynthesis; UDP-N-acetyl-alpha-D-glucosamine from N-acetyl-alpha-D-glucosamine 1-phosphate: step 1/1. It functions in the pathway bacterial outer membrane biogenesis; LPS lipid A biosynthesis. Catalyzes the last two sequential reactions in the de novo biosynthetic pathway for UDP-N-acetylglucosamine (UDP-GlcNAc). The C-terminal domain catalyzes the transfer of acetyl group from acetyl coenzyme A to glucosamine-1-phosphate (GlcN-1-P) to produce N-acetylglucosamine-1-phosphate (GlcNAc-1-P), which is converted into UDP-GlcNAc by the transfer of uridine 5-monophosphate (from uridine 5-triphosphate), a reaction catalyzed by the N-terminal domain. This chain is Bifunctional protein GlmU, found in Bifidobacterium longum (strain NCC 2705).